Consider the following 146-residue polypeptide: Prefoldin subunit alpha 1 (146 aa).

The protein belongs to the prefoldin subunit alpha family. Heterohexamer of two alpha and four beta subunits.

The protein localises to the cytoplasm. Molecular chaperone capable of stabilizing a range of proteins. Seems to fulfill an ATP-independent, HSP70-like function in archaeal de novo protein folding. This chain is Prefoldin subunit alpha 1, found in Thermococcus kodakarensis (strain ATCC BAA-918 / JCM 12380 / KOD1) (Pyrococcus kodakaraensis (strain KOD1)).